Reading from the N-terminus, the 242-residue chain is Ubiquinone biosynthesis O-methyltransferase (242 aa).

The S-adenosyl-L-methionine site is built by Arg-44, Gly-64, Asp-85, and Met-129.

It belongs to the methyltransferase superfamily. UbiG/COQ3 family.

The catalysed reaction is a 3-demethylubiquinol + S-adenosyl-L-methionine = a ubiquinol + S-adenosyl-L-homocysteine + H(+). It catalyses the reaction a 3-(all-trans-polyprenyl)benzene-1,2-diol + S-adenosyl-L-methionine = a 2-methoxy-6-(all-trans-polyprenyl)phenol + S-adenosyl-L-homocysteine + H(+). It participates in cofactor biosynthesis; ubiquinone biosynthesis. Functionally, O-methyltransferase that catalyzes the 2 O-methylation steps in the ubiquinone biosynthetic pathway. The sequence is that of Ubiquinone biosynthesis O-methyltransferase from Salmonella typhi.